The chain runs to 233 residues: uncharacterized protein (233 aa).

Histidine 64, histidine 66, aspartate 68, histidine 69, histidine 143, aspartate 162, and histidine 212 together coordinate Zn(2+).

It belongs to the metallo-beta-lactamase superfamily. Glyoxalase II family. Zn(2+) is required as a cofactor.

This is an uncharacterized protein from Bacillus subtilis (strain 168).